We begin with the raw amino-acid sequence, 98 residues long: Cell division topological specificity factor (98 aa).

It belongs to the MinE family.

In terms of biological role, prevents the cell division inhibition by proteins MinC and MinD at internal division sites while permitting inhibition at polar sites. This ensures cell division at the proper site by restricting the formation of a division septum at the midpoint of the long axis of the cell. This Nitrosomonas eutropha (strain DSM 101675 / C91 / Nm57) protein is Cell division topological specificity factor.